A 255-amino-acid polypeptide reads, in one-letter code: Homeobox protein Hox-D4 (255 aa).

The segment at 31–128 (EQGADYYGGG…KQPPPGTALK (98 aa)) is disordered. Residues 94–109 (EPCPAPPAPPPAPLPG) are compositionally biased toward pro residues. An Antp-type hexapeptide motif is present at residues 133 to 138 (VYPWMK). A DNA-binding region (homeobox) is located at residues 154-213 (PKRSRTAYTRQQVLELEKEFHFNRYLTRRRRIEIAHTLCLSERQIKIWFQNRRMKWKKDH). Residues 212 to 255 (DHKLPNTKGRSSSSSSSSSCSSSVAPSQHLQPMAKDHHTDLTTL) are disordered. The span at 222 to 234 (SSSSSSSSSCSSS) shows a compositional bias: low complexity. Residues 245–255 (AKDHHTDLTTL) show a composition bias toward basic and acidic residues.

This sequence belongs to the Antp homeobox family. Deformed subfamily. Forms a DNA-binding heterodimer with transcription factor PBX1.

The protein resides in the nucleus. Its function is as follows. Sequence-specific transcription factor which is part of a developmental regulatory system that provides cells with specific positional identities on the anterior-posterior axis. The chain is Homeobox protein Hox-D4 (HOXD4) from Gorilla gorilla gorilla (Western lowland gorilla).